Here is a 464-residue protein sequence, read N- to C-terminus: MKLWGGRFTRTTDRLVEDFHSSISFDQRLYKEDIAGSIAHARMLAAVGLITPAEGEAIIKGLEEIRADIEAGRVTFDVGAEDIHMNIEKLLTERIGEAGKKLHTARSRNDQVALDLRLYLKEEIPAVKKLLAGLQQVLVDLAAQHLQTIMPGYTHLQKAQPVTLAHHLMAYFEMFYRDQQRLDDCLDRVDVMPLGAGALAGTTLPIDRELVARELGFKAISANSLDAVSDRDFVVEFLAAASLIMMHLSRLAEEVIFWSSEEFGFLELDDAYSTGSSMMPQKKNPDVAELVRGKTGRVYGHLMGMLAVLKGLPLAYNKDLQEDKEALFDTLDTVKGCLMVFTPMLATARFRVERMRADASRGFAAATDVAEYLVRKGLPFREAHAVVGSLVLHCLREGRSFQDLSLEEWQSFSPLFDNDIFGCLEAEACVNGRNLPGGPAPEAVGKAIERAREILAGIQAGLSR.

This sequence belongs to the lyase 1 family. Argininosuccinate lyase subfamily.

It is found in the cytoplasm. The catalysed reaction is 2-(N(omega)-L-arginino)succinate = fumarate + L-arginine. Its pathway is amino-acid biosynthesis; L-arginine biosynthesis; L-arginine from L-ornithine and carbamoyl phosphate: step 3/3. In Moorella thermoacetica (strain ATCC 39073 / JCM 9320), this protein is Argininosuccinate lyase.